Consider the following 120-residue polypeptide: Small ribosomal subunit protein eS24 (120 aa).

Residues 101–120 are disordered; the sequence is RDAGTKQKKGGSKGGQGAKG.

The protein belongs to the eukaryotic ribosomal protein eS24 family.

The chain is Small ribosomal subunit protein eS24 from Saccharolobus islandicus (strain Y.N.15.51 / Yellowstone #2) (Sulfolobus islandicus).